The chain runs to 87 residues: MAHKKAGGSTRNGRDSIGKRLGVKLFGGQKAYPGNIIVRQRGTKFHPGKNVGCGKDYSLYALKSGIVFFKKKKNKKFINIIPKILCK.

Belongs to the bacterial ribosomal protein bL27 family.

The sequence is that of Large ribosomal subunit protein bL27 from Wigglesworthia glossinidia brevipalpis.